The following is a 413-amino-acid chain: Sensor protein SphS (413 aa).

The Histidine kinase domain occupies 176 to 398; sequence DVAHELKTPL…WLRVQLPQEP (223 aa). Position 179 is a phosphohistidine; by autocatalysis (His179).

It is found in the cytoplasm. The enzyme catalyses ATP + protein L-histidine = ADP + protein N-phospho-L-histidine.. In terms of biological role, member of the two-component regulatory system SphR/SphS. Sensory kinase. Is involved in inducible production of alkaline phosphatase in response to phosphate limitation as it is directly involved in the regulation of phoA transcription in response to phosphate limitation. SphS functions as a protein kinase that phosphorylates SphR. This chain is Sensor protein SphS (sphS), found in Synechococcus elongatus (strain ATCC 33912 / PCC 7942 / FACHB-805) (Anacystis nidulans R2).